The following is a 445-amino-acid chain: MSYFGTDGIRGKFGQMPITPEFALKLGFAAGKVLKRTSPKNKPLVVLGKDTRLSGYILESALQAGLNAAGVYVHLLGPLPTPAIAHLTRALHAHAGIVISASHNPYFDNGIKFFSSEGKKLPDSLQEEINKELEKDLFIEDTANLGKSVRVTDANGRYIEFCKSTFPYHFDLNNLKIVVDCAHGAAYSVGPSVFRELGAKVVALYNEPDGLNINENCGSTHPESLQKAVVEHGADLGIAFDGDADRVVMVDKFGSLIDGDHILYILATQAKNKPAGVVGTVMSNMALEVALEKANVGFVRAKVGDRYVLQALEENGWVTGGEPSGHILTLDKSTTGDAIIAALQVLTVMVEQNKALHELVHDFKLYPQVLVNVRLEQMLDPYSIPALVAEFNKAEEQLKGRGRILIRKSGTEPVIRVMVEGDNEQEVKTLAEHLANAVRSQAQVA.

Catalysis depends on serine 102, which acts as the Phosphoserine intermediate. Positions 102, 241, 243, and 245 each coordinate Mg(2+). The residue at position 102 (serine 102) is a Phosphoserine.

Belongs to the phosphohexose mutase family. The cofactor is Mg(2+). Post-translationally, activated by phosphorylation.

It carries out the reaction alpha-D-glucosamine 1-phosphate = D-glucosamine 6-phosphate. Catalyzes the conversion of glucosamine-6-phosphate to glucosamine-1-phosphate. In Acinetobacter baumannii (strain ACICU), this protein is Phosphoglucosamine mutase.